The chain runs to 530 residues: Type 2 DNA topoisomerase 6 subunit B (530 aa).

ATP is bound by residues Asn-42, Asp-76, 97-98, 106-113, and Lys-427; these read SK and GMYGLGVK.

The protein belongs to the TOP6B family. As to quaternary structure, homodimer. Heterotetramer of two Top6A and two Top6B chains.

The enzyme catalyses ATP-dependent breakage, passage and rejoining of double-stranded DNA.. In terms of biological role, relaxes both positive and negative superturns and exhibits a strong decatenase activity. This Saccharolobus islandicus (strain M.16.4 / Kamchatka #3) (Sulfolobus islandicus) protein is Type 2 DNA topoisomerase 6 subunit B.